We begin with the raw amino-acid sequence, 529 residues long: Bifunctional purine biosynthesis protein PurH (529 aa).

One can recognise an MGS-like domain in the interval 1-148; sequence MQQRRPVRRA…KNHKDVAIVV (148 aa). Lysine 287 carries the post-translational modification N6-acetyllysine.

Belongs to the PurH family.

The enzyme catalyses (6R)-10-formyltetrahydrofolate + 5-amino-1-(5-phospho-beta-D-ribosyl)imidazole-4-carboxamide = 5-formamido-1-(5-phospho-D-ribosyl)imidazole-4-carboxamide + (6S)-5,6,7,8-tetrahydrofolate. It catalyses the reaction IMP + H2O = 5-formamido-1-(5-phospho-D-ribosyl)imidazole-4-carboxamide. Its pathway is purine metabolism; IMP biosynthesis via de novo pathway; 5-formamido-1-(5-phospho-D-ribosyl)imidazole-4-carboxamide from 5-amino-1-(5-phospho-D-ribosyl)imidazole-4-carboxamide (10-formyl THF route): step 1/1. It participates in purine metabolism; IMP biosynthesis via de novo pathway; IMP from 5-formamido-1-(5-phospho-D-ribosyl)imidazole-4-carboxamide: step 1/1. This is Bifunctional purine biosynthesis protein PurH from Escherichia coli O17:K52:H18 (strain UMN026 / ExPEC).